A 256-amino-acid chain; its full sequence is Acetyl-coenzyme A carboxylase carboxyl transferase subunit alpha (256 aa).

The CoA carboxyltransferase C-terminal domain occupies 1–236 (MTDVARILKE…RSHLIDEITQ (236 aa)).

It belongs to the AccA family. Acetyl-CoA carboxylase is a heterohexamer composed of biotin carboxyl carrier protein (AccB), biotin carboxylase (AccC) and two subunits each of ACCase subunit alpha (AccA) and ACCase subunit beta (AccD).

It is found in the cytoplasm. The enzyme catalyses N(6)-carboxybiotinyl-L-lysyl-[protein] + acetyl-CoA = N(6)-biotinyl-L-lysyl-[protein] + malonyl-CoA. The protein operates within lipid metabolism; malonyl-CoA biosynthesis; malonyl-CoA from acetyl-CoA: step 1/1. Its function is as follows. Component of the acetyl coenzyme A carboxylase (ACC) complex. First, biotin carboxylase catalyzes the carboxylation of biotin on its carrier protein (BCCP) and then the CO(2) group is transferred by the carboxyltransferase to acetyl-CoA to form malonyl-CoA. In Streptococcus equi subsp. zooepidemicus (strain MGCS10565), this protein is Acetyl-coenzyme A carboxylase carboxyl transferase subunit alpha.